We begin with the raw amino-acid sequence, 530 residues long: Na(+)/H(+) antiporter NhaB (530 aa).

Helical transmembrane passes span Phe-13–Pro-33, Leu-98–Phe-118, Leu-123–Phe-145, Leu-149–Tyr-166, Leu-205–Pro-225, Phe-238–Leu-258, Ile-308–Leu-328, Val-330–Phe-350, Phe-356–Phe-376, Leu-393–Gly-413, Ala-451–Ile-471, and Ile-480–Phe-500.

It belongs to the NhaB Na(+)/H(+) (TC 2.A.34) antiporter family.

It localises to the cell inner membrane. The catalysed reaction is 2 Na(+)(in) + 3 H(+)(out) = 2 Na(+)(out) + 3 H(+)(in). Functionally, na(+)/H(+) antiporter that extrudes sodium in exchange for external protons. This is Na(+)/H(+) antiporter NhaB from Vibrio atlanticus (strain LGP32) (Vibrio splendidus (strain Mel32)).